The chain runs to 406 residues: uncharacterized protein (406 aa).

Residue Gly-2 is the site of N-myristoyl glycine; by host attachment. The disordered stretch occupies residues 291–406 (QLESTTEVKP…FQYNKPTYDI (116 aa)). Over residues 296–310 (TEVKPESTTEVKPES) the composition is skewed to basic and acidic residues. Residues 311–323 (TSEVQPESTTEFQ) are compositionally biased toward polar residues. 3 stretches are compositionally biased toward low complexity: residues 324-333 (PESTTVVEPE), 341-351 (ESTTEFQPEST), and 359-369 (TTEPQVESTTE). Residues 370–406 (FQPESSTEPQVESTVEVQAESMNESSYFQYNKPTYDI) show a composition bias toward polar residues.

This is an uncharacterized protein from Acanthamoeba polyphaga (Amoeba).